Reading from the N-terminus, the 706-residue chain is Polyribonucleotide nucleotidyltransferase (706 aa).

Residues D486 and D492 each coordinate Mg(2+). A KH domain is found at 553–612 (PRIYTMKINPEKIKDVIGKGGSVIRALTDETGTTIEIEDDGTIKIAATDGDKAKHAIRRI). Positions 622–690 (NRIYAGKVTR…RQGRIRLSMK (69 aa)) constitute an S1 motif domain.

The protein belongs to the polyribonucleotide nucleotidyltransferase family. As to quaternary structure, component of the RNA degradosome, which is a multiprotein complex involved in RNA processing and mRNA degradation. Mg(2+) serves as cofactor.

The protein localises to the cytoplasm. The enzyme catalyses RNA(n+1) + phosphate = RNA(n) + a ribonucleoside 5'-diphosphate. In terms of biological role, involved in mRNA degradation. Catalyzes the phosphorolysis of single-stranded polyribonucleotides processively in the 3'- to 5'-direction. This chain is Polyribonucleotide nucleotidyltransferase, found in Yersinia enterocolitica serotype O:8 / biotype 1B (strain NCTC 13174 / 8081).